The following is a 58-amino-acid chain: Protein translocase subunit SecE (58 aa).

Residues Ile-36 to Val-56 form a helical membrane-spanning segment.

This sequence belongs to the SecE/SEC61-gamma family. Component of the Sec protein translocase complex. Heterotrimer consisting of SecY (alpha), SecG (beta) and SecE (gamma) subunits. The heterotrimers can form oligomers, although 1 heterotrimer is thought to be able to translocate proteins. Interacts with the ribosome. May interact with SecDF, and other proteins may be involved.

It localises to the cell membrane. Its function is as follows. Essential subunit of the Sec protein translocation channel SecYEG. Clamps together the 2 halves of SecY. May contact the channel plug during translocation. This chain is Protein translocase subunit SecE, found in Halorubrum lacusprofundi (strain ATCC 49239 / DSM 5036 / JCM 8891 / ACAM 34).